A 332-amino-acid polypeptide reads, in one-letter code: DNA repair and recombination protein RadA (332 aa).

126 to 133 (GEFGSGKT) is an ATP binding site.

The protein belongs to the eukaryotic RecA-like protein family.

In terms of biological role, involved in DNA repair and in homologous recombination. Binds and assemble on single-stranded DNA to form a nucleoprotein filament. Hydrolyzes ATP in a ssDNA-dependent manner and promotes DNA strand exchange between homologous DNA molecules. The sequence is that of DNA repair and recombination protein RadA from Pyrobaculum calidifontis (strain DSM 21063 / JCM 11548 / VA1).